Reading from the N-terminus, the 168-residue chain is Photosystem I assembly protein Ycf3 (168 aa).

TPR repeat units lie at residues 35 to 68, 72 to 105, and 120 to 153; these read AFTYYRDGMSAQSEGNYAEALQNYYEAMRLEMDP, SYILYNIGLIHTSNGEHTKALEYYFRALERNPFL, and GEQAVREGDSEIAEAWFDQAAEYWKQAIALTPGN.

The protein belongs to the Ycf3 family.

It localises to the plastid. The protein resides in the chloroplast thylakoid membrane. Essential for the assembly of the photosystem I (PSI) complex. May act as a chaperone-like factor to guide the assembly of the PSI subunits. The sequence is that of Photosystem I assembly protein Ycf3 from Plantago lanceolata (English plantain).